A 195-amino-acid chain; its full sequence is Probable GTP-binding protein EngB (195 aa).

The region spanning 22-194 (LKGEVAFVGR…LDLISTLLKE (173 aa)) is the EngB-type G domain. GTP is bound by residues 30 to 37 (GRSNVGKS), 56 to 60 (GKTRS), 74 to 77 (DLPG), 141 to 144 (TKMD), and 173 to 175 (TSS). Mg(2+) is bound by residues S37 and T58.

Belongs to the TRAFAC class TrmE-Era-EngA-EngB-Septin-like GTPase superfamily. EngB GTPase family. Mg(2+) is required as a cofactor.

Necessary for normal cell division and for the maintenance of normal septation. This Thermotoga sp. (strain RQ2) protein is Probable GTP-binding protein EngB.